The primary structure comprises 238 residues: Urease accessory protein UreF (238 aa).

It belongs to the UreF family. UreD, UreF and UreG form a complex that acts as a GTP-hydrolysis-dependent molecular chaperone, activating the urease apoprotein by helping to assemble the nickel containing metallocenter of UreC. The UreE protein probably delivers the nickel.

The protein resides in the cytoplasm. Functionally, required for maturation of urease via the functional incorporation of the urease nickel metallocenter. The polypeptide is Urease accessory protein UreF (Delftia acidovorans (strain DSM 14801 / SPH-1)).